We begin with the raw amino-acid sequence, 110 residues long: DNA-directed RNA polymerase subunit omega (110 aa).

The protein belongs to the RNA polymerase subunit omega family. In terms of assembly, the RNAP catalytic core consists of 2 alpha, 1 beta, 1 beta' and 1 omega subunit. When a sigma factor is associated with the core the holoenzyme is formed, which can initiate transcription.

The enzyme catalyses RNA(n) + a ribonucleoside 5'-triphosphate = RNA(n+1) + diphosphate. Promotes RNA polymerase assembly. Latches the N- and C-terminal regions of the beta' subunit thereby facilitating its interaction with the beta and alpha subunits. The chain is DNA-directed RNA polymerase subunit omega from Mycobacterium leprae (strain Br4923).